The sequence spans 201 residues: Recombination protein RecR (201 aa).

The C4-type zinc finger occupies 60 to 75 (CSCCGNVDTSDPCTIC). Positions 83-178 (ATLIVVEDVS…RVTRLAHGVP (96 aa)) constitute a Toprim domain.

The protein belongs to the RecR family.

Functionally, may play a role in DNA repair. It seems to be involved in an RecBC-independent recombinational process of DNA repair. It may act with RecF and RecO. This chain is Recombination protein RecR, found in Brucella abortus biovar 1 (strain 9-941).